The primary structure comprises 110 residues: UPF0339 protein SO_3888 (110 aa).

Repeat copies occupy residues 10–58 and 61–109.

This sequence belongs to the UPF0339 family. Duplicated subfamily.

The sequence is that of UPF0339 protein SO_3888 from Shewanella oneidensis (strain ATCC 700550 / JCM 31522 / CIP 106686 / LMG 19005 / NCIMB 14063 / MR-1).